Here is a 316-residue protein sequence, read N- to C-terminus: MSATESLVAGRTRRANAGNKMRELLEKEHLRMTQQNAEIEKEDEEYNIEEEEEAERDIEISSESSDEEAELKKLEEEGEEVEKILRDEERIKKRKIQKNRAANLQRTLQPPKRPTPSAASEVPKKKYKKIKVDPSARRTSSRMHTVLMAQSTETRLQEAKPRRKYTVSASANRQKGTMTQQQRFEEAAKTEAQNLSSLRNYVHLEEQRRLRLKRNAAKHRQLREPILKFISKTISTEDGREASNYYVAPLEHPLCHSAPPLQMPQHRAVECVITGKPAIYLDPVTQLPISNVQAFQQVREVYNQRYSWSAMLNLFH.

3 disordered regions span residues 1–81 (MSAT…GEEV), 93–127 (KRKI…KKKY), and 153–180 (ETRL…TMTQ). The span at 20-31 (KMRELLEKEHLR) shows a compositional bias: basic and acidic residues. Residues 20-95 (KMRELLEKEH…RDEERIKKRK (76 aa)) are a coiled coil. Over residues 40 to 56 (EKEDEEYNIEEEEEAER) the composition is skewed to acidic residues. A phosphoserine mark is found at S64 and S65. Over residues 70–81 (ELKKLEEEGEEV) the composition is skewed to basic and acidic residues. Positions 167–180 (VSASANRQKGTMTQ) are enriched in polar residues.

Belongs to the VPS72/YL1 family. As to quaternary structure, component of the SWR1 chromatin-remodeling complex.

The protein localises to the nucleus. Functionally, participates in the catalytic exchange of histone H2A for the H2A variant pht1, an euchromatin-specific factor, leading to chromatin remodeling and changes in transcription of targeted genes. This Schizosaccharomyces pombe (strain 972 / ATCC 24843) (Fission yeast) protein is SWR complex protein 2 (swc2).